A 176-amino-acid chain; its full sequence is Oligoribonuclease (176 aa).

In terms of domain architecture, Exonuclease spans 2-159 (EMTGLNPETD…DDILESIEEM (158 aa)). Tyr-117 is a catalytic residue.

The protein belongs to the oligoribonuclease family.

Its subcellular location is the cytoplasm. Functionally, 3'-to-5' exoribonuclease specific for small oligoribonucleotides. In Neisseria gonorrhoeae (strain ATCC 700825 / FA 1090), this protein is Oligoribonuclease.